A 153-amino-acid chain; its full sequence is 6,7-dimethyl-8-ribityllumazine synthase 1 (153 aa).

5-amino-6-(D-ribitylamino)uracil contacts are provided by residues Phe-16, Ala-50–Glu-52, and Cys-74–Ile-76. Glu-79 to Thr-80 provides a ligand contact to (2S)-2-hydroxy-3-oxobutyl phosphate. The Proton donor role is filled by His-82. Residue Phe-107 participates in 5-amino-6-(D-ribitylamino)uracil binding. Position 121 (Arg-121) interacts with (2S)-2-hydroxy-3-oxobutyl phosphate.

Belongs to the DMRL synthase family.

It catalyses the reaction (2S)-2-hydroxy-3-oxobutyl phosphate + 5-amino-6-(D-ribitylamino)uracil = 6,7-dimethyl-8-(1-D-ribityl)lumazine + phosphate + 2 H2O + H(+). The protein operates within cofactor biosynthesis; riboflavin biosynthesis; riboflavin from 2-hydroxy-3-oxobutyl phosphate and 5-amino-6-(D-ribitylamino)uracil: step 1/2. In terms of biological role, catalyzes the formation of 6,7-dimethyl-8-ribityllumazine by condensation of 5-amino-6-(D-ribitylamino)uracil with 3,4-dihydroxy-2-butanone 4-phosphate. This is the penultimate step in the biosynthesis of riboflavin. The chain is 6,7-dimethyl-8-ribityllumazine synthase 1 from Caulobacter vibrioides (strain ATCC 19089 / CIP 103742 / CB 15) (Caulobacter crescentus).